Consider the following 556-residue polypeptide: Arginine--tRNA ligase (556 aa).

Positions 132-142 (ANPTGDLHLGH) match the 'HIGH' region motif.

It belongs to the class-I aminoacyl-tRNA synthetase family. In terms of assembly, monomer.

Its subcellular location is the cytoplasm. It catalyses the reaction tRNA(Arg) + L-arginine + ATP = L-arginyl-tRNA(Arg) + AMP + diphosphate. The polypeptide is Arginine--tRNA ligase (Shouchella clausii (strain KSM-K16) (Alkalihalobacillus clausii)).